The primary structure comprises 1843 residues: MIFNSFLLGNLLSLCMKIINSVVVVGLYYGFLTTFSIGPSYLFLLRARVMEEGTEKEVSATTGFITGQLMMFISIYYAPLHLALGRPHTITVLVLPYLLFHFFWNNHKHFFDYGSTTRNSMRNLSIQCVFLNNLIFQLFNHFILPSPTLARLVNIYMFRCNNKMLFVTSSFVGWLIGHILFMKWVGLVLFWIRQNRSIRSNKYLVSELRNSMARIRIFSILLFITCVYYLGRIPSPIVTKKLKETSKTEEREESEEETDVEIETTSETKGTKQEQEGAAEKEVKDDKDLFWFEKPLVTLLFDYKRWNRPLRYIKNERFENAVRNEMSQYFFYTCISDGKQRISFTYPPSLSTFFEMIQKKLFLCTTEKISSEELYNHWAYTNEQKRNNLSKEFINRIETLDEGSLDLDILEKKTRLCNDENEQKCLPKIYDPFLNGPHRGTIQNLYSHSSMNNLLITSIKDSIKTLWINKYQGILDTDCREFEKEFAEEPMPNLNLKSPSSQGKFYSENQSKNFFDAATTYPNDQTIIDIEESLEINEIKKTVPRWLYKLTDDLEEEEIENDEESKPDHGIRSRKAKRVVIFTDNEKNQNTPTSTTETTSTAETTSTTETTSTTKNTSTTKNTSTTETTSTTENENTSNQDQSDEVALTRYSQQPDFRRDLIKGSMRAQRRKTVTWELFQATVRSPLFLDRVDKTFFFSFDISGTLKYFFRNWMGKDAEFKISNSEEEDTKEKEKKREEKRQENERIRISETWDTIIFAQAIRGYMLVTQSILRKYIVLPSLIIAKNIGRMLLFQFPEWHEDLKAWNKEMHVKCTYNGVQLSEKEFPKNWLTDGIQIKILFPFCLKPWHRSKVQFDHRDPMKKKGKPENFCFLTVWGMEAELPFGSPRKRPSFFEPIWKEIEKNIIKMKKKCFIALRILKERTKWFIRVSKEKTRWVIKIFLFIKRIMKELAKAKVSPIPLFGLREIDESSINTNQKYYINIKSNQIIHESPIRIRSLDWINYSLTAKKIKDVVDRTSTIRNQIEKITKDKKKLFLTPDRNINPNKIGCDDKGLESLKKIWQKLKRRSNRLIRKCYYFLKFFIERIYTDILFCIINSLRIKVKLFLEAKNKLFYKNSSNDETNKKGIDETNPNTIHFISTIKKSLSNINNSNNNSQIFCDLDSLSQAYVFYKLSQTQVFNKYHLRSVLQYRGTLLFLKDRIKDSFGTQGIFHSESGHKKLRNFRMNEWKNWLRGRYHYQYDFSQTRWSRLVPQKWRNRIHQRCMVQTKNSTYSDLYEKDQLIHYEKQNNYAVELNQKDKFKNYKYDKYDRLSHKYIHYEDKKDSYIYRSPLQVNEAKEFLYNYNTYNYSTYNPKLFFMSGDISLNNYLREDSDTEKNLDRKYFDWKIFNFCLRTKIDIEYWTNMDIGANVNKKTKTQTNYYQIIDKKDLFSIAIHKQINPAKQTKTSFDWMAMNEEILNCPISNLELWFFPEFVSFYNAYKIQPWTIPINLLLLNFNGNENVSEKQNINGKEKKDLPILSKSNQKKSLELKNKEEKKKPAQENIGSDTQKQGNPGSDPSTQQKDIKKNVKEDYDGRSDIQKRKKKKQSTGNIAAELDLFLKRYFLFQLRWDNPLNKKIINNVKVYCLLLRLKNPKEIAIASIQRDEMSLDVMPISKTLTLAKLINKGMLIIEPARLSIKRDGQFLLYQTITISRVHKNKHQTNQRYQEKRNVDKNGLEKSIARHEKLVGNRDKNPLLVLENILSSQRRRELRIRICLNSGNVNVVDRNPVFCNGNNASNCDQFLNEERHLDIDTNKFLKFKLLLWPNYRLEDLACINRYWFDTNNGSRFSMSRIRMYPQLRIS.

The next 6 helical transmembrane spans lie at 18 to 38 (IINS…FSIG), 64 to 84 (FITG…HLAL), 87 to 107 (PHTI…WNNH), 124 to 144 (LSIQ…HFIL), 172 to 192 (VGWL…LFWI), and 217 to 237 (IFSI…PSPI). 5 disordered regions span residues 244 to 281 (ETSK…AAEK), 557 to 576 (EEIE…SRKA), 582 to 647 (FTDN…DEVA), 724 to 744 (NSEE…RQEN), and 1527 to 1586 (SLEL…KKKK). Residues 251-264 (REESEEETDVEIET) show a composition bias toward acidic residues. Positions 269 to 281 (KGTKQEQEGAAEK) are enriched in basic and acidic residues. The segment covering 590-639 (NTPTSTTETTSTAETTSTTETTSTTKNTSTTKNTSTTETTSTTENENTSN) has biased composition (low complexity). Basic and acidic residues-rich tracts occupy residues 730-744 (TKEK…RQEN) and 1527-1540 (SLEL…KKPA). Residues 1543–1562 (NIGSDTQKQGNPGSDPSTQQ) are compositionally biased toward polar residues. Residues 1563–1580 (KDIKKNVKEDYDGRSDIQ) are compositionally biased toward basic and acidic residues.

This sequence belongs to the TIC214 family. As to quaternary structure, part of the Tic complex.

It localises to the plastid. Its subcellular location is the chloroplast inner membrane. Functionally, involved in protein precursor import into chloroplasts. May be part of an intermediate translocation complex acting as a protein-conducting channel at the inner envelope. The chain is Protein TIC 214 from Nandina domestica (Heavenly bamboo).